Consider the following 400-residue polypeptide: Acetate kinase (400 aa).

Mg(2+) is bound at residue Asn10. An ATP-binding site is contributed by Lys17. Arg91 contacts substrate. Residue Asp150 is the Proton donor/acceptor of the active site. Residues 210–214 (HLGNG), 285–287 (DCR), and 333–337 (GIGEN) each bind ATP. Glu387 lines the Mg(2+) pocket.

It belongs to the acetokinase family. In terms of assembly, homodimer. The cofactor is Mg(2+). Mn(2+) serves as cofactor.

The protein resides in the cytoplasm. It carries out the reaction acetate + ATP = acetyl phosphate + ADP. It participates in metabolic intermediate biosynthesis; acetyl-CoA biosynthesis; acetyl-CoA from acetate: step 1/2. Functionally, catalyzes the formation of acetyl phosphate from acetate and ATP. Can also catalyze the reverse reaction. The protein is Acetate kinase of Yersinia pseudotuberculosis serotype I (strain IP32953).